Reading from the N-terminus, the 209-residue chain is Regulator of G-protein signaling 1 (209 aa).

Residues 18 to 42 are disordered; that stretch reads FFSASPKDSKEPSHSLLDDNKQKKR. Basic and acidic residues predominate over residues 24–38; sequence KDSKEPSHSLLDDNK. Residues 85 to 200 enclose the RGS domain; it reads SLEKLLANQM…LKSNIYLNLL (116 aa).

Interacts with GNAI1 and GNAQ. Expressed in multiple tissues.

The protein resides in the cell membrane. Its subcellular location is the cytoplasm. It localises to the cytosol. Its function is as follows. Regulates G protein-coupled receptor signaling cascades, including signaling downstream of the N-formylpeptide chemoattractant receptors and leukotriene receptors. Inhibits B cell chemotaxis toward CXCL12. Inhibits signal transduction by increasing the GTPase activity of G protein alpha subunits, thereby driving them into their inactive GDP-bound form. The protein is Regulator of G-protein signaling 1 (Rgs1) of Rattus norvegicus (Rat).